The primary structure comprises 262 residues: Transmembrane protein 270 (262 aa).

A run of 5 helical transmembrane segments spans residues 6–26, 30–50, 67–87, 92–112, and 127–147; these read LVRSSLSGTLLVVVKLSALLI, AHLYNFLLLKIFLFNHWLLGL, PVGRVLWAGLTLLEVPVCLAL, LVWAGLLGCARALGLGPKWLG, and LFLSCLHSLMLAALLLLLLVW. Positions 226–262 are disordered; that stretch reads QEAEPQKALGLSSETPPPGPPAPGARPVLPEPGTPGE. The segment covering 240 to 262 has biased composition (pro residues); the sequence is TPPPGPPAPGARPVLPEPGTPGE.

The protein resides in the membrane. This chain is Transmembrane protein 270, found in Bos taurus (Bovine).